Reading from the N-terminus, the 212-residue chain is Large ribosomal subunit protein uL4 (212 aa).

This sequence belongs to the universal ribosomal protein uL4 family. In terms of assembly, part of the 50S ribosomal subunit.

Functionally, one of the primary rRNA binding proteins, this protein initially binds near the 5'-end of the 23S rRNA. It is important during the early stages of 50S assembly. It makes multiple contacts with different domains of the 23S rRNA in the assembled 50S subunit and ribosome. Forms part of the polypeptide exit tunnel. This Caulobacter sp. (strain K31) protein is Large ribosomal subunit protein uL4.